Reading from the N-terminus, the 347-residue chain is MKNLLGSTIKDLENVALDYGQAGFRGRQIYNWIYNYRNKKKNIDQIEVLPLDFRKRLKDDGFKVSDLSIHERNLANDGTLKLLLSTEDNESIECVGIPTEKRLTACLSSQVGCPMDCKFCATGKEGLKRSLKVSEILDQILFIENEMNRKVTNIVFMGMGEPLLNIDDLLLSIRSINEDLKISQRKITVSTVAVPKMINKLSAKSFKILGNCQFTLAVSLHAPNQKIRETIIPSAKNYEIENIIEDCKQYVRDTGRRVSFEYLMLRGVNDKIEHANELSHLLKGFQCHVNLIQYNQIDEVEFQRACLKDLQSFQSRLSHNGIAVSLRKSRGLDKNAACGQLRQNARN.

The Proton acceptor role is filled by glutamate 93. In terms of domain architecture, Radical SAM core spans 99–333; the sequence is TEKRLTACLS…VSLRKSRGLD (235 aa). Cysteine 106 and cysteine 338 are oxidised to a cystine. [4Fe-4S] cluster is bound by residues cysteine 113, cysteine 117, and cysteine 120. Residues 160–161, serine 190, 219–221, and asparagine 295 contribute to the S-adenosyl-L-methionine site; these read GE and SLH. The S-methylcysteine intermediate role is filled by cysteine 338.

This sequence belongs to the radical SAM superfamily. RlmN family. Requires [4Fe-4S] cluster as cofactor.

The protein resides in the cytoplasm. The enzyme catalyses adenosine(2503) in 23S rRNA + 2 reduced [2Fe-2S]-[ferredoxin] + 2 S-adenosyl-L-methionine = 2-methyladenosine(2503) in 23S rRNA + 5'-deoxyadenosine + L-methionine + 2 oxidized [2Fe-2S]-[ferredoxin] + S-adenosyl-L-homocysteine. The catalysed reaction is adenosine(37) in tRNA + 2 reduced [2Fe-2S]-[ferredoxin] + 2 S-adenosyl-L-methionine = 2-methyladenosine(37) in tRNA + 5'-deoxyadenosine + L-methionine + 2 oxidized [2Fe-2S]-[ferredoxin] + S-adenosyl-L-homocysteine. Functionally, specifically methylates position 2 of adenine 2503 in 23S rRNA and position 2 of adenine 37 in tRNAs. The chain is Probable dual-specificity RNA methyltransferase RlmN from Prochlorococcus marinus (strain MIT 9301).